Consider the following 269-residue polypeptide: Uncharacterised methyltransferase MT1546 (269 aa).

This sequence belongs to the methyltransferase superfamily.

The protein is Uncharacterised methyltransferase MT1546 of Mycobacterium tuberculosis (strain CDC 1551 / Oshkosh).